We begin with the raw amino-acid sequence, 62 residues long: Photosystem II reaction center protein Z (62 aa).

2 consecutive transmembrane segments (helical) span residues 8–28 (AVFA…VVFA) and 41–61 (FSGT…NSLI).

This sequence belongs to the PsbZ family. PSII is composed of 1 copy each of membrane proteins PsbA, PsbB, PsbC, PsbD, PsbE, PsbF, PsbH, PsbI, PsbJ, PsbK, PsbL, PsbM, PsbT, PsbY, PsbZ, Psb30/Ycf12, at least 3 peripheral proteins of the oxygen-evolving complex and a large number of cofactors. It forms dimeric complexes.

The protein localises to the plastid. Its subcellular location is the chloroplast thylakoid membrane. Its function is as follows. May control the interaction of photosystem II (PSII) cores with the light-harvesting antenna, regulates electron flow through the 2 photosystem reaction centers. PSII is a light-driven water plastoquinone oxidoreductase, using light energy to abstract electrons from H(2)O, generating a proton gradient subsequently used for ATP formation. This chain is Photosystem II reaction center protein Z, found in Jasminum nudiflorum (Winter jasmine).